The following is a 390-amino-acid chain: GTPase Obg (390 aa).

Residues 1–159 enclose the Obg domain; it reads MKFIDESLIR…RDLLLELMLL (159 aa). Residues 160–333 enclose the OBG-type G domain; sequence ADVGMLGLPN…LCRDIMDFII (174 aa). GTP-binding positions include 166 to 173, 191 to 195, 213 to 216, 283 to 286, and 314 to 316; these read GLPNAGKS, FTTLV, DIPG, NKID, and SAA. Residues serine 173 and threonine 193 each contribute to the Mg(2+) site. The tract at residues 363-382 is disordered; the sequence is EHQFDDDEDWDDDWSEEDDE. Over residues 366 to 382 the composition is skewed to acidic residues; that stretch reads FDDDEDWDDDWSEEDDE.

Belongs to the TRAFAC class OBG-HflX-like GTPase superfamily. OBG GTPase family. Monomer. The cofactor is Mg(2+).

It localises to the cytoplasm. Functionally, an essential GTPase which binds GTP, GDP and possibly (p)ppGpp with moderate affinity, with high nucleotide exchange rates and a fairly low GTP hydrolysis rate. Plays a role in control of the cell cycle, stress response, ribosome biogenesis and in those bacteria that undergo differentiation, in morphogenesis control. This Haemophilus influenzae (strain ATCC 51907 / DSM 11121 / KW20 / Rd) protein is GTPase Obg.